The sequence spans 206 residues: Emopamil-binding protein-like (206 aa).

Transmembrane regions (helical) follow at residues 10–30, 42–62, 101–121, and 165–185; these read EAGG…ALGL, GALI…GPFV, VEIL…YAIV, and CWLY…LLLW. Positions 39 to 184 constitute an EXPERA domain; the sequence is ADRGALIWLC…VWVLIPGLLL (146 aa).

Belongs to the EBP family. In terms of assembly, homodimer. Widely expressed with highest levels in liver, lung and kidney.

Its subcellular location is the endoplasmic reticulum membrane. Functionally, does not possess sterol isomerase activity and does not bind sigma ligands. In Homo sapiens (Human), this protein is Emopamil-binding protein-like (EBPL).